We begin with the raw amino-acid sequence, 918 residues long: Chaperone protein ClpC1, chloroplastic (918 aa).

Residues 88 to 230 form the Clp R domain; it reads FERFTEKAIK…RTQVIRMVGE (143 aa). 2 repeat regions span residues 91–156 and 166–230; these read FTEK…IGRG and FTPR…MVGE. Residues 251-498 are i; it reads LEEYGTNLTK…RVRLRHAQLP (248 aa). Residue 296-303 participates in ATP binding; the sequence is GEPGVGKT. The UVR domain maps to 505-540; it reads DKELRQVTKDKNEAVRGQDFEKAGELRDREMELKAQ. The tract at residues 565–756 is II; it reads VTEADIQHIV…LLIMTSNVGS (192 aa). 639–646 is a binding site for ATP; sequence GPTGVGKS.

This sequence belongs to the ClpA/ClpB family. ClpC subfamily. Widely expressed.

It is found in the plastid. Its subcellular location is the chloroplast. Its function is as follows. Molecular chaperone that may interact with a ClpP-like protease involved in degradation of denatured proteins in the chloroplast. This Oryza sativa subsp. japonica (Rice) protein is Chaperone protein ClpC1, chloroplastic (CLPC1).